A 328-amino-acid polypeptide reads, in one-letter code: Flap endonuclease 1 (328 aa).

An N-domain region spans residues 1–98 (MGVKLRDVVS…ETVSRRADIR (98 aa)). 7 residues coordinate Mg(2+): Asp27, Asp80, Glu152, Glu154, Asp173, Asp175, and Asp226. An I-domain region spans residues 116–247 (RAKKYAVRSS…RGLKLIREKG (132 aa)). Residues 320–328 (TQKSLEDWF) form an interaction with PCNA region.

The protein belongs to the XPG/RAD2 endonuclease family. FEN1 subfamily. In terms of assembly, interacts with PCNA. PCNA stimulates the nuclease activity without altering cleavage specificity. Mg(2+) serves as cofactor.

Structure-specific nuclease with 5'-flap endonuclease and 5'-3' exonuclease activities involved in DNA replication and repair. During DNA replication, cleaves the 5'-overhanging flap structure that is generated by displacement synthesis when DNA polymerase encounters the 5'-end of a downstream Okazaki fragment. Binds the unpaired 3'-DNA end and kinks the DNA to facilitate 5' cleavage specificity. Cleaves one nucleotide into the double-stranded DNA from the junction in flap DNA, leaving a nick for ligation. Also involved in the base excision repair (BER) pathway. Acts as a genome stabilization factor that prevents flaps from equilibrating into structures that lead to duplications and deletions. Also possesses 5'-3' exonuclease activity on nicked or gapped double-stranded DNA. In Methanothermobacter thermautotrophicus (strain ATCC 29096 / DSM 1053 / JCM 10044 / NBRC 100330 / Delta H) (Methanobacterium thermoautotrophicum), this protein is Flap endonuclease 1.